The primary structure comprises 175 residues: ATP synthase subunit delta (175 aa).

It belongs to the ATPase delta chain family. F-type ATPases have 2 components, F(1) - the catalytic core - and F(0) - the membrane proton channel. F(1) has five subunits: alpha(3), beta(3), gamma(1), delta(1), epsilon(1). F(0) has three main subunits: a(1), b(2) and c(10-14). The alpha and beta chains form an alternating ring which encloses part of the gamma chain. F(1) is attached to F(0) by a central stalk formed by the gamma and epsilon chains, while a peripheral stalk is formed by the delta and b chains.

Its subcellular location is the cell membrane. Functionally, f(1)F(0) ATP synthase produces ATP from ADP in the presence of a proton or sodium gradient. F-type ATPases consist of two structural domains, F(1) containing the extramembraneous catalytic core and F(0) containing the membrane proton channel, linked together by a central stalk and a peripheral stalk. During catalysis, ATP synthesis in the catalytic domain of F(1) is coupled via a rotary mechanism of the central stalk subunits to proton translocation. Its function is as follows. This protein is part of the stalk that links CF(0) to CF(1). It either transmits conformational changes from CF(0) to CF(1) or is implicated in proton conduction. The polypeptide is ATP synthase subunit delta (Lactococcus lactis subsp. lactis (strain IL1403) (Streptococcus lactis)).